Consider the following 464-residue polypeptide: MEERKVKRIIMFPLPFTGHFNPMIELAGIFHNRGFSVTILHTSFNFPDPSRHPQFTFRTITHKNEGEEDPLSQSETSSGKDLVVLISLLKQYYTEPSLAEEVGEGGTVCCLVSDALWGRNTEIVAKEIGVCTMVMRTSGAATFCAYTAFPLLIDKGYLPIQGSRLDELVTELPPLKVKDLPVIKTKEPEGLNRILNDMVEGAKLSSGVVWNTFEDLERHSLMDCRSKLQVPLFPIGPFHKHRTDLPPKPKNKDKDDDEILTDWLNKQAPQSVVYVSFGSLAAIEENEFFEIAWGLRNSELPFLWVVRPGMVRGTEWLESLPCGFLENIGHQGKIVKWVNQLETLAHPAVGAFWTHCGWNSTIESICEGVPMICTPCFSDQHVNARYIVDVWRVGMMLERCKMERTEIEKVVTSVMMENGAGLTEMCLELKEKANVCLSEDGSSSKYLDKLVSHVLSFDSSAFAS.

UDP-alpha-D-glucose-binding positions include serine 279, valine 338–glutamine 340, histidine 355–glutamate 363, and phenylalanine 377–glutamine 380.

The protein belongs to the UDP-glycosyltransferase family.

This chain is UDP-glycosyltransferase 76F2 (UGT76F2), found in Arabidopsis thaliana (Mouse-ear cress).